Here is an 876-residue protein sequence, read N- to C-terminus: E3 ubiquitin-protein ligase TRIM71 (876 aa).

An RING-type zinc finger spans residues 12–90; the sequence is CPLCKEMCGS…ALKLRCPICD (79 aa). Positions 26 to 40 are enriched in low complexity; sequence SSNSSTSSSSSQTSG. Disordered regions lie at residues 26–46 and 128–192; these read SSNSSTSSSSSQTSGSSGGGG and KNGR…AALL. A compositionally biased stretch (gly residues) spans 137-148; that stretch reads PAAGSGAGGGGA. Residues 160–182 show a composition bias toward low complexity; it reads RAAAAASSPAAGSAAPSASSSSS. A B box-type 1; atypical zinc finger spans residues 200–247; that stretch reads QGEPRCSSCDEGNAASSRCLDCQEHLCDNCVRAHQRVRLTKDHFIERF. Zn(2+) contacts are provided by Cys205, Cys208, Cys229, His233, Cys286, His289, Cys309, and His314. Residues 281 to 322 form a B box-type 2 zinc finger; sequence ERASYCQHHDDEVLHFYCDTCSVPICRECTMGRHVGHSFIYL. Coiled-coil stretches lie at residues 344–373 and 399–434; these read RQAIQLSIEQAQAVAEQVEMKAKVVQSEVK and QVKAKSLYLQVEKLRQNLNKLDNTISAVQQVLEEGR. The Filamin repeat unit spans residues 487 to 588; sequence SSGAFAPLTK…IENSPFKVVV (102 aa). NHL repeat units follow at residues 601–644, 648–691, 695–738, 742–785, 789–832, and 836–876; these read GLSF…FKPC, HHKF…FTFE, ILKF…FGPD, LNKY…IHAD, ARFL…FESN, and LCKF…ILVF.

Belongs to the TRIM/RBCC family.

Its subcellular location is the cytoplasm. The protein localises to the P-body. It carries out the reaction S-ubiquitinyl-[E2 ubiquitin-conjugating enzyme]-L-cysteine + [acceptor protein]-L-lysine = [E2 ubiquitin-conjugating enzyme]-L-cysteine + N(6)-ubiquitinyl-[acceptor protein]-L-lysine.. It participates in protein modification; protein ubiquitination. In terms of biological role, E3 ubiquitin-protein ligase that cooperates with the microRNAs (miRNAs) machinery and promotes embryonic stem cells proliferation and maintenance. Binds to miRNAs and participates in post-transcriptional repression of transcripts. Required to maintain proliferation and prevent premature differentiation of neural progenitor cells during early neural development. This chain is E3 ubiquitin-protein ligase TRIM71 (TRIM71), found in Gallus gallus (Chicken).